An 825-amino-acid chain; its full sequence is Trimethylamine-N-oxide reductase (825 aa).

The segment at residues 1–40 (MKKNNVNEQRRDFLKKTSLGVAGSALSGGMVGVVSKSAVA) is a signal peptide (tat-type signal). Ser187 is a binding site for Mo-bis(molybdopterin guanine dinucleotide).

Belongs to the prokaryotic molybdopterin-containing oxidoreductase family. Mo-bis(molybdopterin guanine dinucleotide) serves as cofactor. In terms of processing, predicted to be exported by the Tat system. The position of the signal peptide cleavage has not been experimentally proven.

The protein localises to the periplasm. It catalyses the reaction trimethylamine + 2 Fe(III)-[cytochrome c] + H2O = trimethylamine N-oxide + 2 Fe(II)-[cytochrome c] + 3 H(+). Its function is as follows. Reduces trimethylamine-N-oxide (TMAO) into trimethylamine; an anaerobic reaction coupled to energy-yielding reactions. This chain is Trimethylamine-N-oxide reductase (torZ), found in Haemophilus influenzae (strain ATCC 51907 / DSM 11121 / KW20 / Rd).